A 370-amino-acid polypeptide reads, in one-letter code: Cathepsin B-like cysteine proteinase 3 (370 aa).

The N-terminal stretch at 1 to 16 is a signal peptide; that stretch reads MLKVYFLALFLAGCSA. Residues 17 to 91 constitute a propeptide that is removed on maturation; that stretch reads FVLDEIRGIN…FVRGEIVPEP (75 aa). Cystine bridges form between Cys105–Cys134, Cys117–Cys162, Cys153–Cys210, Cys154–Cys158, Cys190–Cys214, and Cys198–Cys202. The active site involves Cys120. N-linked (GlcNAc...) asparagine glycosylation is present at Asn138. Residues His284 and Asn304 contribute to the active site.

It belongs to the peptidase C1 family.

In Caenorhabditis elegans, this protein is Cathepsin B-like cysteine proteinase 3 (cpr-3).